Here is a 575-residue protein sequence, read N- to C-terminus: MVAKLEQLIAQTILQGFDAQYGRFLEVTAGAQHRFEQADWHAVQQAMKKRIHLYDHHVGLVVEQLKYITDQRHFDVEFLARVKEIYTGLLPDYPRFEIAESFFNSVYCRLFKHRDLTPDKLFVFSSQPERRFREIPRPLARDFIPKGDLSGMLQMVLNDLSLRLHWENLSRDIDYIVMAIRQAFTDEQLASAHFQIANELFYRNKAAWLVGKLRLNGDIYPFLLPIHHNESGELFIDTCLTSKAEASIVFGFARSYFMVYVPLPAAMVEWLREILPGKSTAELYTAIGCQKHGKTESYREYLAFIHQSSEQFIIAPGVKGMVMLVFTLPSFDRVFKVIKDQFAPQKEVTQARVLECYQLVKEHDRVGRMADTQEYENFVIDKHRISPELLAELQHEVPEKLEDLGDKIVIKHLYMERRMTPLNLYMEQADDQQLKDAIEEYGNAIKQLAAANIFPGDMLFKNFGVTRHGRVVFYDYDEICYMTEVNFRDIPPPRYPEDEMASEPWYSVSPNDVFPEEFRHFLCSDRKVRHFFEEMHGDLFQASYWRGLQQRIRDGHVEDVFAYRRKQRFSQRALN.

ATP contacts are provided by residues 315-321 (APGVKGM) and K336. Residue D371 is part of the active site.

The protein belongs to the AceK family.

It localises to the cytoplasm. It catalyses the reaction L-seryl-[isocitrate dehydrogenase] + ATP = O-phospho-L-seryl-[isocitrate dehydrogenase] + ADP + H(+). Its function is as follows. Bifunctional enzyme which can phosphorylate or dephosphorylate isocitrate dehydrogenase (IDH) on a specific serine residue. This is a regulatory mechanism which enables bacteria to bypass the Krebs cycle via the glyoxylate shunt in response to the source of carbon. When bacteria are grown on glucose, IDH is fully active and unphosphorylated, but when grown on acetate or ethanol, the activity of IDH declines drastically concomitant with its phosphorylation. In Yersinia pseudotuberculosis serotype O:1b (strain IP 31758), this protein is Isocitrate dehydrogenase kinase/phosphatase.